Consider the following 174-residue polypeptide: Shikimate kinase 2 (174 aa).

12–17 (GAGKTT) contacts ATP. 2 residues coordinate Mg(2+): Thr-16 and Asp-32. 3 residues coordinate substrate: Asp-34, Arg-58, and Gly-79. An LID domain region spans residues 112–126 (EEYPQDTQRPTLTGR). Position 120 (Arg-120) interacts with ATP. Arg-139 contributes to the substrate binding site.

It belongs to the shikimate kinase family. AroL subfamily. In terms of assembly, monomer. The cofactor is Mg(2+).

It is found in the cytoplasm. It carries out the reaction shikimate + ATP = 3-phosphoshikimate + ADP + H(+). It participates in metabolic intermediate biosynthesis; chorismate biosynthesis; chorismate from D-erythrose 4-phosphate and phosphoenolpyruvate: step 5/7. Functionally, catalyzes the specific phosphorylation of the 3-hydroxyl group of shikimic acid using ATP as a cosubstrate. This chain is Shikimate kinase 2, found in Serratia proteamaculans (strain 568).